A 316-amino-acid polypeptide reads, in one-letter code: GPI-specific phospholipase A2-like PGAP3 (316 aa).

The first 19 residues, 1 to 19 (MFLAAAAFLLSAPASASQG), serve as a signal peptide directing secretion. The Lumenal portion of the chain corresponds to 20-97 (DKEPVYRDCV…GKWPFARFLC (78 aa)). N36 is a glycosylation site (N-linked (GlcNAc...) asparagine). The helical transmembrane segment at 98-118 (FEEPASALASLLNGLACLLML) threads the bilayer. Topologically, residues 119–131 (LRYRSAVPCQSPM) are cytoplasmic. Residues 132 to 152 (YHTITAFSLVSLNAWFWSTVF) traverse the membrane as a helical segment. At 153–165 (HTRDTYLTEKMDY) the chain is on the lumenal side. The helical transmembrane segment at 166-186 (FCASAVILYSIYLCCVRTLGL) threads the bilayer. The Cytoplasmic portion of the chain corresponds to 187–194 (RRPAISSM). A helical transmembrane segment spans residues 195–215 (VGVLLILAFTSHVSYLTFVSF). Residues 216–220 (DYGYN) are Lumenal-facing. A helical transmembrane segment spans residues 221-241 (MAANASIGIINLLWWLCWCWL). The Cytoplasmic portion of the chain corresponds to 242-254 (NRRILPYWWRCGM). A helical transmembrane segment spans residues 255 to 275 (VVLLLHGLALLELLDFPPLFW). Residues 276-278 (VLD) lie on the Lumenal side of the membrane. The helical transmembrane segment at 279-299 (AHAVWHLSTVPVHFLFYSFLI) threads the bilayer. Over 300–316 (DDSLHLLNTEKPGVKLD) the chain is Cytoplasmic.

Belongs to the PGAP3 family.

Its subcellular location is the golgi apparatus membrane. Its function is as follows. Involved in the fatty acid remodeling steps of GPI-anchor maturation where the unsaturated acyl chain at sn-2 of inositol phosphate is replaced by a saturated stearoyl chain. May catalyze the first step of the fatty acid remodeling, by removing the unsaturated acyl chain at sn-2 of inositol phosphate, generating a lyso-GPI intermediate. The fatty acid remodeling steps is critical for the integration of GPI-APs into lipid rafts. This is GPI-specific phospholipase A2-like PGAP3 from Danio rerio (Zebrafish).